The sequence spans 239 residues: Ribonuclease PH (239 aa).

Phosphate is bound by residues R87 and 125 to 127; that span reads GTR.

It belongs to the RNase PH family. Homohexameric ring arranged as a trimer of dimers.

It carries out the reaction tRNA(n+1) + phosphate = tRNA(n) + a ribonucleoside 5'-diphosphate. Its function is as follows. Phosphorolytic 3'-5' exoribonuclease that plays an important role in tRNA 3'-end maturation. Removes nucleotide residues following the 3'-CCA terminus of tRNAs; can also add nucleotides to the ends of RNA molecules by using nucleoside diphosphates as substrates, but this may not be physiologically important. Probably plays a role in initiation of 16S rRNA degradation (leading to ribosome degradation) during starvation. This is Ribonuclease PH from Cellvibrio japonicus (strain Ueda107) (Pseudomonas fluorescens subsp. cellulosa).